We begin with the raw amino-acid sequence, 65 residues long: Ringhalexin (65 aa).

4 cysteine pairs are disulfide-bonded: cysteine 3–cysteine 24, cysteine 17–cysteine 42, cysteine 46–cysteine 57, and cysteine 58–cysteine 63.

As to expression, expressed by the venom gland.

The protein resides in the secreted. Has anticoagulant activity, since it is able to inhibit the activation of coagulation factor X (F10) by coagulation factor VIIa (F7) (IC(50)=123.8 nM). Also shows weak irreversible neurotoxicity. The sequence is that of Ringhalexin from Hemachatus haemachatus (Rinkhals).